A 346-amino-acid polypeptide reads, in one-letter code: MLFKQQAWLRQKLLVLGSLAVGSLLYLVARVGSLDRLQPICPIEGRLGGARTQAEFPLRALQFKRGLLHEFRKGNASKEQVRLHDLVQQLPKAIIIGVRKGGTRALLEMLNLHPAVVKASQEIHFFDNDENYGKGIEWYRKKMPFSYPQQITIEKSPAYFITEEVPERIYKMNSSIKLLIIVREPTTRAISDYTQVLEGKERKNKTYYKFEKLAIDPNTCEVNTKYKAVRTSIYTKHLERWLKYFPIEQFHVVDGDRLITEPLPELQLVEKFLNLPPRISQYNLYFNATRGFYCLRFNIIFNKCLAGSKGRIHPEVDPSVITKLRKFFHPFNQKFYQITGRTLNWP.

The Cytoplasmic segment spans residues 1–12 (MLFKQQAWLRQK). Residues 13 to 32 (LLVLGSLAVGSLLYLVARVG) traverse the membrane as a helical; Signal-anchor for type II membrane protein segment. The Lumenal segment spans residues 33–346 (SLDRLQPICP…QITGRTLNWP (314 aa)). 3'-phosphoadenylyl sulfate is bound at residue 100–104 (KGGTR). Residues 122 to 128 (EIHFFDN) and 155 to 158 (KSPA) contribute to the substrate site. Residues Arg183 and Ser191 each coordinate 3'-phosphoadenylyl sulfate. 226–227 (YK) contacts substrate. Asn287 is a glycosylation site (N-linked (GlcNAc...) asparagine). Tyr293 is a binding site for 3'-phosphoadenylyl sulfate. An intrachain disulfide couples Cys294 to Cys304. A 3'-phosphoadenylyl sulfate-binding site is contributed by 309 to 313 (KGRIH).

This sequence belongs to the sulfotransferase 1 family. Highly expressed in skeletal muscle and fetal brain, and also found in adult brain, spinal cord, cerebellum and colon.

The protein resides in the golgi apparatus membrane. It carries out the reaction alpha-D-glucosaminyl-[heparan sulfate](n) + 3'-phosphoadenylyl sulfate = 3-sulfo-alpha-D-glucosaminyl-[heparan sulfate](n) + adenosine 3',5'-bisphosphate + H(+). Functionally, sulfotransferase that utilizes 3'-phospho-5'-adenylyl sulfate (PAPS) to catalyze the transfer of a sulfo group to position 3 of glucosamine residues in heparan. Catalyzes the rate limiting step in the biosynthesis of heparan sulfate (HSact). This modification is a crucial step in the biosynthesis of anticoagulant heparan sulfate as it completes the structure of the antithrombin pentasaccharide binding site. Also generates GlcUA-GlcNS or IdoUA-GlcNS and IdoUA2S-GlcNH2. The substrate-specific O-sulfation generates an enzyme-modified heparan sulfate which acts as a binding receptor to Herpes simplex virus-1 (HSV-1) and permits its entry. This Homo sapiens (Human) protein is Heparan sulfate glucosamine 3-O-sulfotransferase 5 (HS3ST5).